The following is a 100-amino-acid chain: NADH-quinone oxidoreductase subunit K 2 (100 aa).

3 helical membrane passes run 4–24, 28–48, and 60–80; these read LWWYIVLGVVLFVIGAAGVLI, ILVVLMSLELLLNSVNINFIA, and IFAIFVIAITAAEVAVALGIL.

This sequence belongs to the complex I subunit 4L family. NDH-1 is composed of 14 different subunits. Subunits NuoA, H, J, K, L, M, N constitute the membrane sector of the complex.

The protein localises to the cell inner membrane. It carries out the reaction a quinone + NADH + 5 H(+)(in) = a quinol + NAD(+) + 4 H(+)(out). Functionally, NDH-1 shuttles electrons from NADH, via FMN and iron-sulfur (Fe-S) centers, to quinones in the respiratory chain. The immediate electron acceptor for the enzyme in this species is believed to be ubiquinone. Couples the redox reaction to proton translocation (for every two electrons transferred, four hydrogen ions are translocated across the cytoplasmic membrane), and thus conserves the redox energy in a proton gradient. The chain is NADH-quinone oxidoreductase subunit K 2 from Rhizobium etli (strain ATCC 51251 / DSM 11541 / JCM 21823 / NBRC 15573 / CFN 42).